Consider the following 227-residue polypeptide: 2-C-methyl-D-erythritol 4-phosphate cytidylyltransferase (227 aa).

It belongs to the IspD/TarI cytidylyltransferase family. IspD subfamily.

It carries out the reaction 2-C-methyl-D-erythritol 4-phosphate + CTP + H(+) = 4-CDP-2-C-methyl-D-erythritol + diphosphate. Its pathway is isoprenoid biosynthesis; isopentenyl diphosphate biosynthesis via DXP pathway; isopentenyl diphosphate from 1-deoxy-D-xylulose 5-phosphate: step 2/6. Its function is as follows. Catalyzes the formation of 4-diphosphocytidyl-2-C-methyl-D-erythritol from CTP and 2-C-methyl-D-erythritol 4-phosphate (MEP). This chain is 2-C-methyl-D-erythritol 4-phosphate cytidylyltransferase, found in Petrotoga mobilis (strain DSM 10674 / SJ95).